A 236-amino-acid polypeptide reads, in one-letter code: Probable glutathione S-transferase GSTU6 (236 aa).

Positions 5–84 (GELKLLGVWS…YIDEVWPGGA (80 aa)) constitute a GST N-terminal domain. Glutathione is bound by residues Ser15, Lys42, Val56, and 68–69 (ES). The GST C-terminal domain occupies 94–228 (DPYERAVARF…KLLEFRQTLL (135 aa)).

This sequence belongs to the GST superfamily. Tau family. As to expression, expressed in seedling shoots and roots.

The catalysed reaction is RX + glutathione = an S-substituted glutathione + a halide anion + H(+). Its function is as follows. Conjugation of reduced glutathione to a wide number of exogenous and endogenous hydrophobic electrophiles. This chain is Probable glutathione S-transferase GSTU6 (GSTU6), found in Oryza sativa subsp. japonica (Rice).